We begin with the raw amino-acid sequence, 285 residues long: Hypersensitive-induced reaction 1 protein (285 aa).

A lipid anchor (N-myristoyl glycine) is attached at glycine 2. Positions 118–190 (FEQKNEIAKS…EKILQIKRAE (73 aa)) form a coiled coil.

Homo- and heterodimer. Interacts with LRR1 (via LRR domain). Constitutively expressed in stems, roots and flowers, but not in leaves and fruits.

In terms of biological role, positive regulator of hypersensitive response (HR)-like cell death. May be involved in potassium ion channel regulation. This Capsicum annuum (Capsicum pepper) protein is Hypersensitive-induced reaction 1 protein.